The following is a 67-amino-acid chain: Large ribosomal subunit protein bL35 (67 aa).

The protein belongs to the bacterial ribosomal protein bL35 family.

The chain is Large ribosomal subunit protein bL35 from Bartonella quintana (strain Toulouse) (Rochalimaea quintana).